Here is a 158-residue protein sequence, read N- to C-terminus: NADPH-dependent 7-cyano-7-deazaguanine reductase (158 aa).

Positions methionine 1–proline 37 are disordered. Positions glutamate 27 to proline 37 are enriched in basic and acidic residues. Cysteine 56 serves as the catalytic Thioimide intermediate. The active-site Proton donor is aspartate 63. Substrate is bound by residues valine 78–serine 80 and histidine 97–glutamate 98.

The protein belongs to the GTP cyclohydrolase I family. QueF type 1 subfamily.

Its subcellular location is the cytoplasm. The catalysed reaction is 7-aminomethyl-7-carbaguanine + 2 NADP(+) = 7-cyano-7-deazaguanine + 2 NADPH + 3 H(+). Its pathway is tRNA modification; tRNA-queuosine biosynthesis. In terms of biological role, catalyzes the NADPH-dependent reduction of 7-cyano-7-deazaguanine (preQ0) to 7-aminomethyl-7-deazaguanine (preQ1). The chain is NADPH-dependent 7-cyano-7-deazaguanine reductase from Bradyrhizobium sp. (strain BTAi1 / ATCC BAA-1182).